We begin with the raw amino-acid sequence, 373 residues long: UDP-N-acetylglucosamine--N-acetylmuramyl-(pentapeptide) pyrophosphoryl-undecaprenol N-acetylglucosamine transferase (373 aa).

Residues 10–12 (TGG), Asn-124, Arg-166, Ser-196, and Gln-301 each bind UDP-N-acetyl-alpha-D-glucosamine.

This sequence belongs to the glycosyltransferase 28 family. MurG subfamily.

It is found in the cell membrane. It catalyses the reaction di-trans,octa-cis-undecaprenyl diphospho-N-acetyl-alpha-D-muramoyl-L-alanyl-D-glutamyl-meso-2,6-diaminopimeloyl-D-alanyl-D-alanine + UDP-N-acetyl-alpha-D-glucosamine = di-trans,octa-cis-undecaprenyl diphospho-[N-acetyl-alpha-D-glucosaminyl-(1-&gt;4)]-N-acetyl-alpha-D-muramoyl-L-alanyl-D-glutamyl-meso-2,6-diaminopimeloyl-D-alanyl-D-alanine + UDP + H(+). Its pathway is cell wall biogenesis; peptidoglycan biosynthesis. Its function is as follows. Cell wall formation. Catalyzes the transfer of a GlcNAc subunit on undecaprenyl-pyrophosphoryl-MurNAc-pentapeptide (lipid intermediate I) to form undecaprenyl-pyrophosphoryl-MurNAc-(pentapeptide)GlcNAc (lipid intermediate II). This chain is UDP-N-acetylglucosamine--N-acetylmuramyl-(pentapeptide) pyrophosphoryl-undecaprenol N-acetylglucosamine transferase, found in Desulforudis audaxviator (strain MP104C).